The sequence spans 222 residues: MESGNVVNVQSELSGIIDGSKSYMYEQLWKLCAGPLCDIPKLGEKVYYFPQGHIELVEASTREELNELQPNCDLPSKLQCRVIAIHLKVENNSDETYVEITLMPDTTQVVIPTENENQFRPIVNSFTKVLTASDTSAQGEFSVPCKHAIECLPPLDMSQPIPAQELIAIDLHGNQWRFKHSYRVPRGDTTGWNAFTTSKKLVVGDVIVFARGETGELRVGIR.

Residues 126–222 (FTKVLTASDT…ETGELRVGIR (97 aa)) constitute a DNA-binding region (TF-B3).

The protein belongs to the ARF family. As to quaternary structure, homo and heterodimers.

Its subcellular location is the nucleus. Auxin response factors (ARFs) are transcriptional factors that binds specifically to the DNA sequence 5'-TGTCTC-3' found in the auxin-responsive promoter elements (AuxREs). Could act as transcriptional activator or repressor. Formation of heterodimers with Aux/IAA proteins may alter their ability to modulate early auxin response genes expression. This Arabidopsis thaliana (Mouse-ear cress) protein is Putative auxin response factor 23 (ARF23).